Consider the following 973-residue polypeptide: Putative helicase 022R (973 aa).

The segment at Ala-473 to Ser-502 is disordered. Acidic residues predominate over residues Asn-483–Asn-498. Positions Gly-658–Ala-840 constitute an SF3 helicase domain. Gly-702–Thr-709 lines the ATP pocket.

The protein is Putative helicase 022R of Frog virus 3 (isolate Goorha) (FV-3).